Reading from the N-terminus, the 1000-residue chain is Vacuolar sorting protein 39 (1000 aa).

Positions 16-282 constitute a CNH domain; the sequence is PARIDAVESY…RRLVKSNNAV (267 aa). Positions 394-413 are disordered; sequence DEASLSRGSSGISDDMESSS. The CHCR repeat unit spans residues 607-796; sequence YSMLVLESCP…YLNPKKSAKD (190 aa). Residues 844-864 form a disordered region; it reads GLSSSTDSGRSDVDTEEPLEE.

Belongs to the VAM6/VPS39 family. In terms of assembly, homooligomer. Component of the homotypic fusion and vacuole protein sorting (HOPS) complex composed of the class C Vps core proteins VPS11, VCL1, VPS18 and VPS33, which in HOPS further associates with VPS39 and VPS41. Interacts directly with VPS11. Binds to RABG3B.

Its subcellular location is the cytoplasm. It is found in the vacuole membrane. Essential protein required during embryogenesis. Believed to act in part as a component of the putative HOPS endosomal tethering complex. HOPS is required for the central vacuole formation. May play a role in clustering and fusion of late endosomes and lysosomes. Plays a role in vesicle-mediated protein trafficking to lysosomal compartments including the endocytic membrane transport and autophagic pathways. Required for fusion of endosomes and autophagosomes with lysosomes. This Arabidopsis thaliana (Mouse-ear cress) protein is Vacuolar sorting protein 39.